Consider the following 96-residue polypeptide: MEKNKHCFYVVECSDGSYYAGYTNHIEKRIETHNSGKGAKYTRARLPVALKYVEFHEDKRTAMQAEYYFKQLNRKQKEEYMQKGEPYVATKKFSTK.

The GIY-YIG domain occupies asparagine 4 to glutamate 79.

It belongs to the UPF0213 family.

In Bacillus cereus (strain ATCC 10987 / NRS 248), this protein is UPF0213 protein BCE_0033.